The chain runs to 153 residues: Histone H2B.3 (153 aa).

Residues 1–28 (MAPKADKKPAAKKPAEEEPATEKAEKAP) show a composition bias toward basic and acidic residues. The interval 1 to 60 (MAPKADKKPAAKKPAEEEPATEKAEKAPAGKKPKAEKRLPAGKSAGKEGGEGKKGKKKAK) is disordered. N6-acetyllysine occurs at positions 7 and 37. Residue Lys149 forms a Glycyl lysine isopeptide (Lys-Gly) (interchain with G-Cter in ubiquitin) linkage.

Belongs to the histone H2B family. In terms of assembly, the nucleosome is a histone octamer containing two molecules each of H2A, H2B, H3 and H4 assembled in one H3-H4 heterotetramer and two H2A-H2B heterodimers. The octamer wraps approximately 147 bp of DNA. Post-translationally, can be acetylated to form H2BK6ac and H2BK33ac. Monoubiquitinated to form H2BK143ub1; may give a specific tag for epigenetic transcriptional activation.

It localises to the nucleus. It is found in the chromosome. Functionally, core component of nucleosome. Nucleosomes wrap and compact DNA into chromatin, limiting DNA accessibility to the cellular machineries which require DNA as a template. Histones thereby play a central role in transcription regulation, DNA repair, DNA replication and chromosomal stability. DNA accessibility is regulated via a complex set of post-translational modifications of histones, also called histone code, and nucleosome remodeling. The sequence is that of Histone H2B.3 from Zea mays (Maize).